The primary structure comprises 175 residues: Transcriptional regulator GadE (175 aa).

The 66-residue stretch at 109–174 (HKNSQLCFSH…DIVTLGITSY (66 aa)) folds into the HTH luxR-type domain. A DNA-binding region (H-T-H motif) is located at residues 133 to 152 (ESNITSTLNISQQTLKIQKF).

Functionally, regulates the expression of several genes involved in acid resistance. Required for the expression of gadA and gadBC, among others, regardless of media or growth conditions. Binds directly to the 20 bp GAD box found in the control regions of both loci. Could be involved in the regulation of the genes coding for the type III secretion system in enterohaemorragic strains. This is Transcriptional regulator GadE (gadE) from Escherichia coli O157:H7.